A 130-amino-acid chain; its full sequence is DNA-directed RNA polymerase subunit omega (130 aa).

The disordered stretch occupies residues 109 to 130 (EEELLKGLEGLAPPEEQPEEDE).

It belongs to the RNA polymerase subunit omega family. In terms of assembly, the RNAP catalytic core consists of 2 alpha, 1 beta, 1 beta' and 1 omega subunit. When a sigma factor is associated with the core the holoenzyme is formed, which can initiate transcription.

It carries out the reaction RNA(n) + a ribonucleoside 5'-triphosphate = RNA(n+1) + diphosphate. Promotes RNA polymerase assembly. Latches the N- and C-terminal regions of the beta' subunit thereby facilitating its interaction with the beta and alpha subunits. The sequence is that of DNA-directed RNA polymerase subunit omega from Rhodopseudomonas palustris (strain BisB5).